Consider the following 816-residue polypeptide: Glycerol-3-phosphate acyltransferase (816 aa).

An HXXXXD motif motif is present at residues 298-303 (CHRSHM).

This sequence belongs to the GPAT/DAPAT family.

Its subcellular location is the cell membrane. The catalysed reaction is sn-glycerol 3-phosphate + an acyl-CoA = a 1-acyl-sn-glycero-3-phosphate + CoA. It participates in phospholipid metabolism; CDP-diacylglycerol biosynthesis; CDP-diacylglycerol from sn-glycerol 3-phosphate: step 1/3. This is Glycerol-3-phosphate acyltransferase from Hamiltonella defensa subsp. Acyrthosiphon pisum (strain 5AT).